We begin with the raw amino-acid sequence, 450 residues long: Probable ECA polymerase (450 aa).

Transmembrane regions (helical) follow at residues 6–26 (FSGL…LTWF), 37–57 (VFFS…TSVL), 63–83 (VGVA…CFYA), 118–138 (VILM…NGFL), 155–175 (GVAL…VYFL), 181–201 (AWLF…MIVG), 207–227 (IIIA…ISLW), 228–248 (MLAA…LKRY), 341–361 (LVVM…GLII), 378–398 (YKAA…IVLA), and 410–430 (VFFI…YWLF).

It belongs to the WzyE family. As to quaternary structure, probably part of a complex composed of WzxE, WzyE and WzzE.

The protein localises to the cell inner membrane. It functions in the pathway bacterial outer membrane biogenesis; enterobacterial common antigen biosynthesis. In terms of biological role, probably involved in the polymerization of enterobacterial common antigen (ECA) trisaccharide repeat units. The protein is Probable ECA polymerase of Escherichia coli O17:K52:H18 (strain UMN026 / ExPEC).